We begin with the raw amino-acid sequence, 267 residues long: uncharacterized protein (267 aa).

The tract at residues 58-90 (RHTDDKQEKNQNEGEDNQKGENKTTDQQDGPKK) is disordered. 2 helical membrane-spanning segments follow: residues 101-121 (IYVLAVAGLSFVTSFIMLSQM) and 226-246 (GMTTVKMIQLIIGVVILAWLG).

It is found in the membrane. This is an uncharacterized protein from Caenorhabditis elegans.